The primary structure comprises 375 residues: Tyrosine--tRNA ligase (375 aa).

L-tyrosine contacts are provided by Tyr-37, Tyr-168, Gln-172, Asp-175, and Gln-190. The 'KMSKS' region signature appears at 251-255 (KMSKS). ATP is bound at residue Lys-254.

The protein belongs to the class-I aminoacyl-tRNA synthetase family. TyrS type 4 subfamily. As to quaternary structure, homodimer.

It is found in the cytoplasm. The enzyme catalyses tRNA(Tyr) + L-tyrosine + ATP = L-tyrosyl-tRNA(Tyr) + AMP + diphosphate + H(+). In terms of biological role, catalyzes the attachment of tyrosine to tRNA(Tyr) in a two-step reaction: tyrosine is first activated by ATP to form Tyr-AMP and then transferred to the acceptor end of tRNA(Tyr). In Thermococcus onnurineus (strain NA1), this protein is Tyrosine--tRNA ligase.